Consider the following 294-residue polypeptide: Phosphate import ATP-binding protein PstB (294 aa).

Positions 1 to 18 (MSETMTNQNVVNEEQPFN) are enriched in polar residues. Residues 1 to 24 (MSETMTNQNVVNEEQPFNESKHRS) form a disordered region. One can recognise an ABC transporter domain in the interval 48-289 (LEVNKLKLFY…PSCKQTEDYI (242 aa)). 80-87 (GPSGCGKS) contacts ATP.

Belongs to the ABC transporter superfamily. Phosphate importer (TC 3.A.1.7) family. In terms of assembly, the complex is composed of two ATP-binding proteins (PstB), two transmembrane proteins (PstC and PstA) and a solute-binding protein (PstS).

It is found in the cell inner membrane. It catalyses the reaction phosphate(out) + ATP + H2O = ADP + 2 phosphate(in) + H(+). In terms of biological role, part of the ABC transporter complex PstSACB involved in phosphate import. Responsible for energy coupling to the transport system. This Hahella chejuensis (strain KCTC 2396) protein is Phosphate import ATP-binding protein PstB.